A 346-amino-acid polypeptide reads, in one-letter code: Protein RecA (346 aa).

65-72 (GPESSGKT) is an ATP binding site.

This sequence belongs to the RecA family.

The protein localises to the cytoplasm. Functionally, can catalyze the hydrolysis of ATP in the presence of single-stranded DNA, the ATP-dependent uptake of single-stranded DNA by duplex DNA, and the ATP-dependent hybridization of homologous single-stranded DNAs. It interacts with LexA causing its activation and leading to its autocatalytic cleavage. The chain is Protein RecA from Enterococcus hirae (strain ATCC 9790 / DSM 20160 / JCM 8729 / LMG 6399 / NBRC 3181 / NCIMB 6459 / NCDO 1258 / NCTC 12367 / WDCM 00089 / R).